Consider the following 922-residue polypeptide: Cell cycle and apoptosis regulator protein 2 (922 aa).

Residues 1-39 (MSQFKRQRINPLPGGRNFSGAASTSLLGPPPGLLTPPVA) are disordered. A Phosphothreonine modification is found at threonine 35. N6-acetyllysine; by KAT8 is present on lysine 112. N6-methyllysine is present on lysine 123. Serine 124 carries the post-translational modification Phosphoserine. 4 disordered regions span residues 178-219 (LNRF…KPRH), 280-307 (RIQV…PTYS), 446-508 (KATE…EPAV), and 567-638 (VSPP…RGEA). Omega-N-methylarginine is present on arginine 180. Positions 188–200 (GRLDQGRSDDYDS) are enriched in basic and acidic residues. Position 215 is an N6-acetyllysine; by KAT8 (lysine 215). The segment covering 473–491 (QADTSKQNTETMEATTQQD) has biased composition (polar residues). Phosphothreonine is present on threonine 483. Serine 568 is subject to Phosphoserine. Residues 571–601 (EPEKEEAAKEDAVKEEEAVKEEAVKVSKDEV) are compositionally biased toward basic and acidic residues. A coiled-coil region spans residues 573–596 (EKEEAAKEDAVKEEEAVKEEAVKV). Lysine 590 participates in a covalent cross-link: Glycyl lysine isopeptide (Lys-Gly) (interchain with G-Cter in SUMO2 and SUMO3); alternate. Lysine 590 participates in a covalent cross-link: Glycyl lysine isopeptide (Lys-Gly) (interchain with G-Cter in SUMO2); alternate. The tract at residues 609–669 (ESDSPLKEDG…DEFAGAKLEE (61 aa)) is interaction with MCC. 5 positions are modified to phosphoserine: serine 612, serine 626, serine 674, serine 677, and serine 680. Tyrosine 684 carries the phosphotyrosine modification. Serine 686 and serine 807 each carry phosphoserine. The interaction with NR1D1 stretch occupies residues 703–922 (DCLLAFVFFD…VEKEEPTPSN (220 aa)). A coiled-coil region spans residues 828–898 (LENKIHTLEL…QDFRRRLTPL (71 aa)). Residue threonine 896 is modified to Phosphothreonine.

As to quaternary structure, component of the DBIRD complex. Interacts with ZNF326/ZIRD; the interaction is direct. Interacts (via N-terminus) with SIRT1, which inhibits the deacetylation of substrates. Interacts (via N-terminus) with SUV39H1; this interaction abolishes the interaction with SIRT1. Component of a nuclear receptor-mediated transcription complex composed of at least ZNF335, CCAR2 and EMSY; the complex stimulates the transcription of nuclear receptor target genes such as SOX9 and HOXA1. Within the complex interacts with EMSY and interacts with ZNF335 (via C-terminus). Components of this complex may associate with components of a histone methylation complex to form a complex at least composed of ZNF335, HCFC1, CCAR2, EMSY, MKI67, RBBP5, ASH2L and WDR5. Within this complex, interacts with ASH2L. Interacts with NR1D1. Interacts (via N-terminus) with ESR1 and ESR2. Interacts (via N-terminus) with HDAC3 (via C-terminus). Interacts with HDAC1 and MED2F. Interacts with MCC. Interacts (via N-terminus) with NR1H2 and NR1H3 in a ligand-independent manner. Interacts with CSNK2A1. Interacts (via N-terminus) with p53/TP53. Interacts (via N-terminus) with BRCA1 (via the BRCT domains). Interacts (via N-terminus) with CHEK2 (via protein kinase domain). Interacts with PSEM3. Interacts (via N-terminus) with PSIA3 and SENP1. The sumoylated form shows a preferential interaction with SIRT1 as compared to its unmodified form. Interacts with CECR2; may form part of the CERF-1 and/or CEF-5 ISWI chromatin remodeling complexes in embryonic stem cells. Acetylation at Lys-112 and Lys-215 by KAT8 prevents inhibitory binding to SIRT1 and increases its deacetylase activity. In terms of processing, genotoxic stress induces its sumoylation and sumoylation promotes the SIRT1-CCAR2 interaction which in turn inhibits SIRT1-mediated deacetylation of p53/TP53. Sumoylation leads to transcriptional activation of p53/TP53 by sequestering SIRT1 from p53/TP53. Desumoylated by SENP1.

It is found in the nucleus. The protein resides in the cytoplasm. It localises to the cytoskeleton. The protein localises to the spindle. Its function is as follows. Core component of the DBIRD complex, a multiprotein complex that acts at the interface between core mRNP particles and RNA polymerase II (RNAPII) and integrates transcript elongation with the regulation of alternative splicing: the DBIRD complex affects local transcript elongation rates and alternative splicing of a large set of exons embedded in (A + T)-rich DNA regions. Inhibits SIRT1 deacetylase activity leading to increasing levels of p53/TP53 acetylation and p53-mediated apoptosis. Inhibits SUV39H1 methyltransferase activity. Mediates ligand-dependent transcriptional activation by nuclear hormone receptors. Plays a critical role in maintaining genomic stability and cellular integrity following UV-induced genotoxic stress. Regulates the circadian expression of the core clock components NR1D1 and BMAL1. Enhances the transcriptional repressor activity of NR1D1 through stabilization of NR1D1 protein levels by preventing its ubiquitination and subsequent degradation. Represses the ligand-dependent transcriptional activation function of ESR2. Acts as a regulator of PCK1 expression and gluconeogenesis by a mechanism that involves, at least in part, both NR1D1 and SIRT1. Negatively regulates the deacetylase activity of HDAC3 and can alter its subcellular localization. Positively regulates the beta-catenin pathway (canonical Wnt signaling pathway) and is required for MCC-mediated repression of the beta-catenin pathway. Represses ligand-dependent transcriptional activation function of NR1H2 and NR1H3 and inhibits the interaction of SIRT1 with NR1H3. Plays an important role in tumor suppression through p53/TP53 regulation; stabilizes p53/TP53 by affecting its interaction with ubiquitin ligase MDM2. Represses the transcriptional activator activity of BRCA1. Inhibits SIRT1 in a CHEK2 and PSEM3-dependent manner and inhibits the activity of CHEK2 in vitro. This chain is Cell cycle and apoptosis regulator protein 2 (Ccar2), found in Mus musculus (Mouse).